We begin with the raw amino-acid sequence, 219 residues long: uncharacterized protein (219 aa).

It to T.pallidum TP_0126.

This is an uncharacterized protein from Treponema pallidum (strain Nichols).